The primary structure comprises 275 residues: Shikimate dehydrogenase (NADP(+)) (275 aa).

Shikimate-binding positions include Ser-19–Ser-21 and Thr-66. Lys-70 (proton acceptor) is an active-site residue. Residue Glu-82 participates in NADP(+) binding. Shikimate contacts are provided by Asn-91 and Asp-106. NADP(+)-binding positions include Gly-130–Ala-134, Asn-154–Lys-159, and Met-217. Shikimate is bound at residue Tyr-219. Gly-241 lines the NADP(+) pocket.

It belongs to the shikimate dehydrogenase family. Homodimer.

The catalysed reaction is shikimate + NADP(+) = 3-dehydroshikimate + NADPH + H(+). Its pathway is metabolic intermediate biosynthesis; chorismate biosynthesis; chorismate from D-erythrose 4-phosphate and phosphoenolpyruvate: step 4/7. Its function is as follows. Involved in the biosynthesis of the chorismate, which leads to the biosynthesis of aromatic amino acids. Catalyzes the reversible NADPH linked reduction of 3-dehydroshikimate (DHSA) to yield shikimate (SA). This chain is Shikimate dehydrogenase (NADP(+)), found in Colwellia psychrerythraea (strain 34H / ATCC BAA-681) (Vibrio psychroerythus).